We begin with the raw amino-acid sequence, 323 residues long: MFNFANFYQLIAQDTRLQPWLNVLPQQLTDWQNAEHGDFDRWLRALNKIPQGVPDQVDLKNSVTIGSSTPFHTGELKKLESLLKTFHPWRKGPYTVHDIHIDTEWRSDWKWDRVLPHISPLKNRSVLDVGCGNGYHMWRMLGEGARLTVGIDPSHLFLVQFEAIRKLMGDDQRAHLLPLGIEQLPKLEAYDTVFSMGVLYHRRSPLDHLIQLKDQLVSGGELVLETLVIEGDENAVLVPVDRYAQMRNVYFFPSARALKRWLEQVGFEDVRIVDENVTTIGEQRTTDWMTHNSLPDYLDPNDPSKTVEGHPAPRRAILVATKP.

Carboxy-S-adenosyl-L-methionine contacts are provided by residues Lys91, Trp105, Lys110, Gly130, Asp152–Ser154, Ile181–Glu182, Met196, Tyr200, and Arg315.

Belongs to the class I-like SAM-binding methyltransferase superfamily. CmoB family. As to quaternary structure, homotetramer.

The catalysed reaction is carboxy-S-adenosyl-L-methionine + 5-hydroxyuridine(34) in tRNA = 5-carboxymethoxyuridine(34) in tRNA + S-adenosyl-L-homocysteine + H(+). Functionally, catalyzes carboxymethyl transfer from carboxy-S-adenosyl-L-methionine (Cx-SAM) to 5-hydroxyuridine (ho5U) to form 5-carboxymethoxyuridine (cmo5U) at position 34 in tRNAs. This Vibrio atlanticus (strain LGP32) (Vibrio splendidus (strain Mel32)) protein is tRNA U34 carboxymethyltransferase.